The primary structure comprises 436 residues: Putative ankyrin repeat protein FPV245 (436 aa).

ANK repeat units lie at residues 1 to 30 (MSVD…CINI), 34 to 63 (ETTT…QVNH), 67 to 96 (KIPN…DTSI), 98 to 119 (PVPC…KVNT), 123 to 152 (KSKT…DVNI), 156 to 185 (NGCY…YANV), 189 to 218 (YGNS…NISN), 222 to 252 (NGVT…DTDV), 253 to 283 (DGYT…DISI), and 287 to 317 (NGRN…LINE).

The polypeptide is Putative ankyrin repeat protein FPV245 (Vertebrata (FPV)).